A 335-amino-acid polypeptide reads, in one-letter code: Tetraacyldisaccharide 4'-kinase (335 aa).

62–69 (NVGGTGKT) is an ATP binding site.

It belongs to the LpxK family.

The enzyme catalyses a lipid A disaccharide + ATP = a lipid IVA + ADP + H(+). The protein operates within glycolipid biosynthesis; lipid IV(A) biosynthesis; lipid IV(A) from (3R)-3-hydroxytetradecanoyl-[acyl-carrier-protein] and UDP-N-acetyl-alpha-D-glucosamine: step 6/6. Transfers the gamma-phosphate of ATP to the 4'-position of a tetraacyldisaccharide 1-phosphate intermediate (termed DS-1-P) to form tetraacyldisaccharide 1,4'-bis-phosphate (lipid IVA). The chain is Tetraacyldisaccharide 4'-kinase from Methylobacillus flagellatus (strain ATCC 51484 / DSM 6875 / VKM B-1610 / KT).